A 66-amino-acid polypeptide reads, in one-letter code: uncharacterized protein (66 aa).

Over residues 1–20 (MTIINSISNFGSNNSFSNNN) the composition is skewed to low complexity. The disordered stretch occupies residues 1-47 (MTIINSISNFGSNNSFSNNNTVNQKSVIKRSKQMKNDNTSIGSSFKN). Over residues 36 to 47 (NDNTSIGSSFKN) the composition is skewed to polar residues.

This is an uncharacterized protein from Dictyostelium discoideum (Social amoeba).